The chain runs to 87 residues: Small ribosomal subunit protein bS20 (87 aa).

It belongs to the bacterial ribosomal protein bS20 family.

Its function is as follows. Binds directly to 16S ribosomal RNA. The protein is Small ribosomal subunit protein bS20 of Neorickettsia sennetsu (strain ATCC VR-367 / Miyayama) (Ehrlichia sennetsu).